Consider the following 320-residue polypeptide: Zinc finger Ran-binding domain-containing protein 2 (320 aa).

The residue at position 9 (Ser9) is a Phosphoserine. A RanBP2-type 1 zinc finger spans residues Ser9–Thr40. N6-acetyllysine occurs at positions 18, 54, and 92. A RanBP2-type 2 zinc finger spans residues Ser65–Ala94. Residues Arg117–Pro320 form a disordered region. Ser120, Ser153, Ser181, Ser188, and Ser193 each carry phosphoserine. A compositionally biased stretch (acidic residues) spans Asp150 to Asp163. A required for nuclear targeting region spans residues Lys151–Pro320. Basic residues predominate over residues Lys196 to His210. Composition is skewed to low complexity over residues Ser211 to Arg224 and Arg232 to Arg242. A compositionally biased stretch (basic residues) spans Ser251–Ser273.

It belongs to the ZRANB2 family. As to quaternary structure, interacts with the C-terminal half of SNRP70/U1-70K, the Arg/Ser-rich domain of AKAP17A as well as with U2AF1 and CLK1. In terms of processing, phosphorylated on Ser-310 upon DNA damage, probably by ATM or ATR.

Its subcellular location is the nucleus. Its function is as follows. Splice factor required for alternative splicing of TRA2B/SFRS10 transcripts. Binds to ssRNA containing the consensus sequence 5'-AGGUAA-3'. May interfere with constitutive 5'-splice site selection. This is Zinc finger Ran-binding domain-containing protein 2 from Pongo abelii (Sumatran orangutan).